The primary structure comprises 710 residues: Pentatricopeptide repeat-containing protein At3g14330 (710 aa).

PPR repeat units lie at residues 166–196, 200–234, 235–269, 270–304, 305–331, 336–370, 371–401, 402–436, 437–467, and 473–503; these read NPKL…VTDS, TEKV…FIEP, GNFS…KEKV, DQVV…NVVT, WNSL…MQEE, SWAT…KEKP, DVPL…MLTK, DLAS…GVAP, DGIT…MKTE, and ALEH…MPFK. Positions 508–583 are type E motif; it reads IWGSLLNSCR…EAGCSWVQVK (76 aa). A type E(+) motif region spans residues 584–615; it reads DKIQIFVAGGGYEFRNSDEYKKVWTELQEAIE. The interval 616 to 710 is type DYW motif; it reads KSGYSPNTSV…DGICSCKDYW (95 aa).

This sequence belongs to the PPR family. PCMP-H subfamily.

This chain is Pentatricopeptide repeat-containing protein At3g14330 (PCMP-H57), found in Arabidopsis thaliana (Mouse-ear cress).